Here is a 123-residue protein sequence, read N- to C-terminus: Probable ketoamine kinase in tonB 3'region (123 aa).

The active-site Proton acceptor is the Asp-26.

This sequence belongs to the fructosamine kinase family.

Functionally, ketoamine kinase that phosphorylates ketoamines on the third carbon of the sugar moiety to generate ketoamine 3-phosphate. This Klebsiella pneumoniae protein is Probable ketoamine kinase in tonB 3'region.